The primary structure comprises 448 residues: Tryptophan dimethylallyltransferase 1 (448 aa).

L-tryptophan contacts are provided by residues 80–81 (IL) and Glu-89. The substrate site is built by Arg-100, Lys-186, and Tyr-188. Residues Tyr-190 and Arg-249 each contribute to the L-tryptophan site. Residues Arg-262, Lys-264, Tyr-266, Gln-348, Tyr-350, Tyr-414, and Tyr-418 each coordinate substrate.

The protein belongs to the tryptophan dimethylallyltransferase family. As to quaternary structure, homodimer.

The catalysed reaction is L-tryptophan + dimethylallyl diphosphate = 4-(3-methylbut-2-enyl)-L-tryptophan + diphosphate. It functions in the pathway alkaloid biosynthesis; ergot alkaloid biosynthesis. Functionally, tryptophan dimethylallyltransferase; part of the gene cluster that mediates the biosynthesis of fungal ergot alkaloid. DmaW catalyzes the first step of ergot alkaloid biosynthesis by condensing dimethylallyl diphosphate (DMAP) and tryptophan to form 4-dimethylallyl-L-tryptophan. The second step is catalyzed by the methyltransferase easF that methylates 4-dimethylallyl-L-tryptophan in the presence of S-adenosyl-L-methionine, resulting in the formation of 4-dimethylallyl-L-abrine. The catalase easC and the FAD-dependent oxidoreductase easE then transform 4-dimethylallyl-L-abrine to chanoclavine-I which is further oxidized by easD in the presence of NAD(+), resulting in the formation of chanoclavine-I aldehyde. Agroclavine dehydrogenase easG then mediates the conversion of chanoclavine-I aldehyde to agroclavine via a non-enzymatic adduct reaction: the substrate is an iminium intermediate that is formed spontaneously from chanoclavine-I aldehyde in the presence of glutathione. The presence of easA is not required to complete this reaction. Further conversion of agroclavine to paspalic acid is a two-step process involving oxidation of agroclavine to elymoclavine and of elymoclavine to paspalic acid, the second step being performed by the elymoclavine oxidase cloA. Paspalic acid is then further converted to D-lysergic acid. Ergopeptines are assembled from D-lysergic acid and three different amino acids by the D-lysergyl-peptide-synthetases composed each of a monomudular and a trimodular nonribosomal peptide synthetase subunit. LpsB and lpsC encode the monomodular subunits responsible for D-lysergic acid activation and incorporation into the ergopeptine backbone. LpsA1 and A2 subunits encode the trimodular nonribosomal peptide synthetase assembling the tripeptide portion of ergopeptines. LpsA1 is responsible for formation of the major ergopeptine, ergotamine, and lpsA2 for alpha-ergocryptine, the minor ergopeptine of the total alkaloid mixture elaborated by C.purpurea. D-lysergyl-tripeptides are assembled by the nonribosomal peptide synthetases and released as N-(D-lysergyl-aminoacyl)-lactams. Cyclolization of the D-lysergyl-tripeptides is performed by the Fe(2+)/2-ketoglutarate-dependent dioxygenase easH which introduces a hydroxyl group into N-(D-lysergyl-aminoacyl)-lactam at alpha-C of the aminoacyl residue followed by spontaneous condensation with the terminal lactam carbonyl group. This chain is Tryptophan dimethylallyltransferase 1, found in Claviceps purpurea (Ergot fungus).